Here is a 274-residue protein sequence, read N- to C-terminus: 4-hydroxy-tetrahydrodipicolinate reductase (274 aa).

7–12 (GVTGRM) is a binding site for NAD(+). Residue R40 coordinates NADP(+). NAD(+)-binding positions include 103–105 (GTT) and 127–130 (SANF). The Proton donor/acceptor role is filled by H160. H161 is a (S)-2,3,4,5-tetrahydrodipicolinate binding site. The Proton donor role is filled by K164. Position 170 to 171 (170 to 171 (GT)) interacts with (S)-2,3,4,5-tetrahydrodipicolinate.

Belongs to the DapB family. In terms of assembly, homotetramer.

It is found in the cytoplasm. The catalysed reaction is (S)-2,3,4,5-tetrahydrodipicolinate + NAD(+) + H2O = (2S,4S)-4-hydroxy-2,3,4,5-tetrahydrodipicolinate + NADH + H(+). It carries out the reaction (S)-2,3,4,5-tetrahydrodipicolinate + NADP(+) + H2O = (2S,4S)-4-hydroxy-2,3,4,5-tetrahydrodipicolinate + NADPH + H(+). The protein operates within amino-acid biosynthesis; L-lysine biosynthesis via DAP pathway; (S)-tetrahydrodipicolinate from L-aspartate: step 4/4. Functionally, catalyzes the conversion of 4-hydroxy-tetrahydrodipicolinate (HTPA) to tetrahydrodipicolinate. The polypeptide is 4-hydroxy-tetrahydrodipicolinate reductase (Blochmanniella floridana).